The primary structure comprises 21 residues: 20 kDa chaperonin, chloroplastic (21 aa).

Belongs to the GroES chaperonin family. In terms of assembly, forms stable complexes with CPN60 in the presence of ATP.

The protein resides in the plastid. It is found in the chloroplast. In terms of biological role, seems to function only as a co-chaperone, along with cpn60, and in certain cases is essential for the discharge of biologically active proteins from cpn60. The chain is 20 kDa chaperonin, chloroplastic (CPN21) from Pisum sativum (Garden pea).